A 335-amino-acid polypeptide reads, in one-letter code: Ankyrin repeat and SOCS box protein 1 (335 aa).

ANK repeat units lie at residues 36-68, 77-106, 110-139, 143-172, 191-220, and 235-265; these read CEDTRLHDAAYVGDLQTLRSLLQEESYRSRINE, LPCTPLRIAATAGHGSCVDFLIRKGAEVDL, KGQTALYVAVVNGHLESTQILLEAGADPNG, HRSTPVYHASRVGRADILKALIRYGADVDV, LVVCPLYISAAYHNLQCFRLLLLAGANPDF, and SPGCVMDAVLRHGCEAAFVSLLVEFGANLNL. Positions 286–335 constitute an SOCS box domain; the sequence is LQVFKEARSVPRTLLCLCRVAVRRALGKHRLHLIPSLPLPDPIKKFLLHE.

The protein belongs to the ankyrin SOCS box (ASB) family. In terms of assembly, interacts with CUL5 and RNF7. Interacts with TAB2 and TAB3.

It is found in the cytoplasm. Its pathway is protein modification; protein ubiquitination. Functionally, probable substrate-recognition component of a SCF-like ECS (Elongin-Cullin-SOCS-box protein) E3 ligase complex which mediates the ubiquitination and subsequent proteasomal degradation of target proteins. Mediates Notch-induced ubiquitination and degradation of TCF3/E2A and JAK2. Functions as a tumor suppressor by enhancing CHCHD3 'Lys-48'-linked ubiquitination, leading to inhibition of the CHCHD3/ROS signaling pathway. Suppresses TAB2-linked 'Lys-48' polyubiquitination and consequently facilitates the initiation of NF-kappa-B and MAPK signaling cascades. May play a role in testis development. In Homo sapiens (Human), this protein is Ankyrin repeat and SOCS box protein 1 (ASB1).